Reading from the N-terminus, the 619-residue chain is Guanylate cyclase soluble subunit beta-1 (619 aa).

His105 contributes to the heme binding site. Residues 421–554 (TILFSGIVGF…NTVNLTSRTE (134 aa)) enclose the Guanylate cyclase domain.

This sequence belongs to the adenylyl cyclase class-4/guanylyl cyclase family. The active enzyme is formed by a heterodimer of an alpha and a beta subunit. Heterodimer with GUCY1A1. Can also form inactive homodimers in vitro. Heme is required as a cofactor. As to expression, lung and brain.

It localises to the cytoplasm. The catalysed reaction is GTP = 3',5'-cyclic GMP + diphosphate. With respect to regulation, activated by nitric oxide in the presence of magnesium or manganese ions, binding of NO to the heme iron increases catalytic activity up to 400 folds. Its function is as follows. Mediates responses to nitric oxide (NO) by catalyzing the biosynthesis of the signaling molecule cGMP. This Bos taurus (Bovine) protein is Guanylate cyclase soluble subunit beta-1 (GUCY1B1).